A 485-amino-acid chain; its full sequence is Adenylate kinase 8 (485 aa).

2 adenylate kinase regions span residues 58–258 (PRVF…TFVL) and 269–472 (PRIL…YTVS). 67 to 72 (ASGKHT) serves as a coordination point for ATP. The tract at residues 87–113 (TPESVLSSDVSLLAKEAQSYRDKGQEV) is NMP 1. AMP-binding positions include 140 to 143 (GFPK) and glutamine 147. The tract at residues 177–206 (GKRIDTANGEVYHTTFDWPSDPTVQRNLVE) is LID 1. Arginine 218 is a binding site for AMP. 278 to 283 (GSGRSL) provides a ligand contact to ATP. Residues 298–327 (CCGQVLKEAVADQTKLGEVIQPYIENDQQV) are NMP 2. Residues 325–327 (QQV), 354–357 (GFPR), and glutamine 361 contribute to the AMP site. Residues 391–424 (LCMTDPVSGERYHDIYKPAPSSEVHERLQQNPRH) are LID 2. Arginine 432 provides a ligand contact to AMP.

It belongs to the adenylate kinase family.

The protein localises to the cytoplasm. It is found in the cytosol. It carries out the reaction AMP + ATP = 2 ADP. The enzyme catalyses a 2'-deoxyribonucleoside 5'-diphosphate + ATP = a 2'-deoxyribonucleoside 5'-triphosphate + ADP. It catalyses the reaction a ribonucleoside 5'-diphosphate + ATP = a ribonucleoside 5'-triphosphate + ADP. In terms of biological role, nucleoside monophosphate (NMP) kinase that catalyzes the reversible transfer of the terminal phosphate group between nucleoside triphosphates and monophosphates. Has highest activity toward AMP, and weaker activity toward dAMP, CMP and dCMP. Also displays broad nucleoside diphosphate kinase activity. In Xenopus tropicalis (Western clawed frog), this protein is Adenylate kinase 8 (ak8).